The chain runs to 536 residues: Organic anion transporter 3 (536 aa).

Residues Met1 to Gly11 are Cytoplasmic-facing. At Ser4 the chain carries Phosphoserine. A helical transmembrane segment spans residues Ser12–Ala32. Over Asn33–Glu123 the chain is Extracellular. N-linked (GlcNAc...) asparagine glycans are attached at residues Asn81 and Asn86. A helical transmembrane segment spans residues Met124 to Ser144. Topologically, residues Asp145–Leu158 are cytoplasmic. Residues Met159–Phe179 traverse the membrane as a helical segment. Position 180 (Arg180) is a topological domain, extracellular. Residues Phe181–Trp201 traverse the membrane as a helical segment. Residues Val202–Thr212 lie on the Cytoplasmic side of the membrane. A helical transmembrane segment spans residues Ser213 to Pro233. At Gln234–Arg236 the chain is on the extracellular side. A helical transmembrane segment spans residues Trp237–Pro257. Topologically, residues Glu258–Thr327 are cytoplasmic. A helical transmembrane segment spans residues Phe328–Val348. The Extracellular portion of the chain corresponds to Glu349 to Asn354. The chain crosses the membrane as a helical span at residues Ile355 to Leu375. Residues Ser376–Arg383 are Cytoplasmic-facing. A helical transmembrane segment spans residues Ile384–Pro404. At Ser405–Arg411 the chain is on the extracellular side. A helical membrane pass occupies residues Thr412 to Tyr432. Over Thr433–Pro471 the chain is Cytoplasmic. A helical membrane pass occupies residues Phe472–Leu492. The Extracellular segment spans residues Leu493 to Gly536. The interval Gln515 to Gly536 is disordered.

The protein belongs to the major facilitator (TC 2.A.1) superfamily. Organic cation transporter (TC 2.A.1.19) family. As to expression, expressed in the liver, brain, kidney, choroid plexus and weakly in the eye. Moderately expressed (at protein level) in the brain capillary endothelial cells (BCEC).

It localises to the basolateral cell membrane. It catalyses the reaction estrone 3-sulfate(out) + glutarate(in) = estrone 3-sulfate(in) + glutarate(out). The enzyme catalyses estrone 3-sulfate(in) + 2-oxoglutarate(out) = estrone 3-sulfate(out) + 2-oxoglutarate(in). It carries out the reaction glutarate(in) + 2-oxoglutarate(out) = glutarate(out) + 2-oxoglutarate(in). The catalysed reaction is urate(in) + 2-oxoglutarate(out) = urate(out) + 2-oxoglutarate(in). It catalyses the reaction taurocholate(out) + glutarate(in) = taurocholate(in) + glutarate(out). The enzyme catalyses dehydroepiandrosterone 3-sulfate(out) + glutarate(in) = dehydroepiandrosterone 3-sulfate(in) + glutarate(out). It carries out the reaction prostaglandin F2alpha(out) + glutarate(in) = prostaglandin F2alpha(in) + glutarate(out). The catalysed reaction is prostaglandin F2alpha(out) + 2-oxoglutarate(in) = prostaglandin F2alpha(in) + 2-oxoglutarate(out). It catalyses the reaction (R)-carnitine(out) + 2-oxoglutarate(in) = (R)-carnitine(in) + 2-oxoglutarate(out). The enzyme catalyses glutarate(in) + (R)-carnitine(out) = glutarate(out) + (R)-carnitine(in). It carries out the reaction prostaglandin E2(out) + 2-oxoglutarate(in) = prostaglandin E2(in) + 2-oxoglutarate(out). The catalysed reaction is prostaglandin E2(out) + glutarate(in) = prostaglandin E2(in) + glutarate(out). It catalyses the reaction urate(in) + glutarate(out) = urate(out) + glutarate(in). The enzyme catalyses taurocholate(out) + 2-oxoglutarate(in) = taurocholate(in) + 2-oxoglutarate(out). It carries out the reaction dehydroepiandrosterone 3-sulfate(out) + 2-oxoglutarate(in) = dehydroepiandrosterone 3-sulfate(in) + 2-oxoglutarate(out). The catalysed reaction is kynurenate(out) + a dicarboxylate(in) = kynurenate(in) + a dicarboxylate(out). It catalyses the reaction (indol-3-yl)acetate(out) + a dicarboxylate(in) = (indol-3-yl)acetate(in) + a dicarboxylate(out). The enzyme catalyses indoxyl sulfate(out) + a dicarboxylate(in) = indoxyl sulfate(in) + a dicarboxylate(out). It carries out the reaction N-benzoylglycine(out) + a dicarboxylate(in) = N-benzoylglycine(in) + a dicarboxylate(out). The catalysed reaction is 3-carboxy-4-methyl-5-propyl-2-furanpropanoate(out) + a dicarboxylate(in) = 3-carboxy-4-methyl-5-propyl-2-furanpropanoate(in) + a dicarboxylate(out). It catalyses the reaction (6R)-L-erythro-5,6,7,8-tetrahydrobiopterin(out) + a dicarboxylate(in) = (6R)-L-erythro-5,6,7,8-tetrahydrobiopterin(in) + a dicarboxylate(out). The enzyme catalyses L-erythro-7,8-dihydrobiopterin(out) + a dicarboxylate(in) = L-erythro-7,8-dihydrobiopterin(in) + a dicarboxylate(out). It carries out the reaction L-sepiapterin(out) + a dicarboxylate(in) = L-sepiapterin(in) + a dicarboxylate(out). In terms of biological role, functions as an organic anion/dicarboxylate exchanger that couples organic anion uptake indirectly to the sodium gradient. Transports organic anions such as estrone 3-sulfate (E1S) and urate in exchange for dicarboxylates such as glutarate or ketoglutarate (2-oxoglutarate). Plays an important role in the excretion of endogenous and exogenous organic anions, especially from the kidney and the brain. E1S transport is pH- and chloride-dependent and may also involve E1S/cGMP exchange. Responsible for the transport of prostaglandin E2 (PGE2) and prostaglandin F2(alpha) (PGF2(alpha)) in the basolateral side of the renal tubule. Involved in the transport of neuroactive tryptophan metabolites kynurenate and xanthurenate. Functions as a biopterin transporters involved in the uptake and the secretion of coenzymes tetrahydrobiopterin (BH4), dihydrobiopterin (BH2) and sepiapterin to urine, thereby determining baseline levels of blood biopterins. May be involved in the basolateral transport of steviol, a metabolite of the popular sugar substitute stevioside. May participate in the detoxification/ renal excretion of drugs and xenobiotics, such as the histamine H(2)-receptor antagonists fexofenadine and cimetidine, the antibiotic benzylpenicillin (PCG), the anionic herbicide 2,4-dichloro-phenoxyacetate (2,4-D), the diagnostic agent p-aminohippurate (PAH), the antiviral acyclovir (ACV), and the mycotoxin ochratoxin (OTA), by transporting these exogenous organic anions across the cell membrane in exchange for dicarboxylates such as 2-oxoglutarate. Contributes to the renal uptake of potent uremic toxins (indoxyl sulfate (IS), indole acetate (IA), hippurate/N-benzoylglycine (HA) and 3-carboxy-4-methyl-5-propyl-2-furanpropionate (CMPF)), pravastatin, PCG, E1S and dehydroepiandrosterone sulfate (DHEAS), and is partly involved in the renal uptake of temocaprilat (an angiotensin-converting enzyme (ACE) inhibitor). May contribute to the release of cortisol in the adrenals. Involved in one of the detoxification systems on the choroid plexus (CP), removes substrates such as E1S or taurocholate (TC), PCG, 2,4-D and PAH, from the cerebrospinal fluid (CSF) to the blood for eventual excretion in urine and bile. Regulates the CSF concentration of histamine H(2)-receptor antagonists cimetidine and ranitidine at the CP. Also contributes to the uptake of several other organic compounds such as the prostanoids prostaglandin E(2) and prostaglandin F(2-alpha), L-carnitine, and the therapeutic drugs allopurinol, 6-mercaptopurine (6-MP) and 5-fluorouracil (5-FU). Mediates the uptake from brain of organic anions, such as E1S, PAH, and OTA. Mediates the transport of PAH, PCG, and the statins pravastatin and pitavastatin, from the cerebrum into the blood circulation across the blood-brain barrier (BBB). In summary, plays a role in the efflux of drugs and xenobiotics, helping reduce their undesired toxicological effects on the body. This is Organic anion transporter 3 (Slc22a8) from Rattus norvegicus (Rat).